Reading from the N-terminus, the 233-residue chain is Small ribosomal subunit protein uS7m (233 aa).

The transit peptide at 1–28 (MAAPTGKLLVHRIRAGLTCLTQVRWSRY) directs the protein to the mitochondrion.

The protein belongs to the universal ribosomal protein uS7 family. As to quaternary structure, component of the mitochondrial ribosome small subunit (28S) which comprises a 12S rRNA and about 30 distinct proteins.

The protein localises to the mitochondrion. This Xenopus laevis (African clawed frog) protein is Small ribosomal subunit protein uS7m (mrps7).